The following is an 84-amino-acid chain: uncharacterized protein (84 aa).

This is an uncharacterized protein from Orgyia pseudotsugata multicapsid polyhedrosis virus (OpMNPV).